Consider the following 326-residue polypeptide: Target of rapamycin complex subunit lst8 (326 aa).

WD repeat units lie at residues 1–37 (MNVN…CTRT), 40–80 (HQDS…PVIN), 83–122 (GVSK…LQCQ), 126–165 (QVNA…NEQL), 168–207 (EPDV…GDEV), 218–257 (AHKR…LMTE), and 268–309 (TSRG…REYS).

The protein belongs to the WD repeat LST8 family. As to quaternary structure, part of the mechanistic target of rapamycin complex 1 (mTORC1) which contains MTOR, MLST8 and RPTOR. Component of the mechanistic target of rapamycin complex 2 (mTORC2), consisting in two heterotretramers composed of MTOR, MLST8, RICTOR and MAPKAP1/SIN1.

Its subcellular location is the lysosome membrane. The protein localises to the cytoplasm. Functionally, subunit of both mTORC1 and mTORC2, which regulates cell growth and survival in response to nutrient and hormonal signals. mTORC1 is activated in response to growth factors or amino acids. In response to nutrients, mTORC1 is recruited to the lysosome membrane and promotes protein, lipid and nucleotide synthesis by phosphorylating several substrates, such as ribosomal protein S6 kinase (RPS6KB1 and RPS6KB2) and EIF4EBP1 (4E-BP1). In the same time, it inhibits catabolic pathways by phosphorylating the autophagy initiation components ULK1 and ATG13, as well as transcription factor TFEB, a master regulators of lysosomal biogenesis and autophagy. The mTORC1 complex is inhibited in response to starvation and amino acid depletion. Within mTORC1, MLST8 interacts directly with MTOR and enhances its kinase activity. In nutrient-poor conditions, stabilizes the MTOR-RPTOR interaction and favors RPTOR-mediated inhibition of MTOR activity. As part of the mTORC2 complex, transduces signals from growth factors to pathways involved in proliferation, cytoskeletal organization, lipogenesis and anabolic output. mTORC2 is also activated by growth factors, but seems to be nutrient-insensitive. In response to growth factors, mTORC2 phosphorylates and activates AGC protein kinase family members, including AKT (AKT1, AKT2 and AKT3), PKC (PRKCA, PRKCB and PRKCE) and SGK1. mTORC2 functions upstream of Rho GTPases to regulate the actin cytoskeleton, probably by activating one or more Rho-type guanine nucleotide exchange factors. mTORC2 promotes the serum-induced formation of stress-fibers or F-actin. Within mTORC2, MLST8 acts as a bridge between MAPKAP1/SIN1 and MTOR. The protein is Target of rapamycin complex subunit lst8 (mlst8) of Danio rerio (Zebrafish).